Reading from the N-terminus, the 155-residue chain is Putative pre-16S rRNA nuclease (155 aa).

Belongs to the YqgF nuclease family.

The protein localises to the cytoplasm. Functionally, could be a nuclease involved in processing of the 5'-end of pre-16S rRNA. This Xanthomonas campestris pv. campestris (strain B100) protein is Putative pre-16S rRNA nuclease.